A 449-amino-acid polypeptide reads, in one-letter code: Flavonol 7-O-beta-glucosyltransferase UGT74F1 (449 aa).

His-18 serves as the catalytic Proton acceptor. His-18 provides a ligand contact to an anthocyanidin. The Charge relay role is filled by Asp-111. UDP-alpha-D-glucose is bound by residues Thr-133, Gln-327, His-342, Trp-345, Asn-346, Ser-347, Glu-350, Asp-366, and Gln-367.

It belongs to the UDP-glycosyltransferase family.

It catalyses the reaction a 7-O-hydroxy-flavonol + UDP-alpha-D-glucose = a flavonol 7-O-beta-D-glucoside + UDP + H(+). In terms of biological role, possesses quercetin 7-O-glucosyltransferase and 4'-O-glucosyltransferase activities in vitro. Also active in vitro on benzoates and benzoate derivatives. Has low affinity for the tryptophan precursor anthranilate. Catalyzes the formation of anthranilate glucose ester. Is a minor source of this activity in the plant. This chain is Flavonol 7-O-beta-glucosyltransferase UGT74F1, found in Arabidopsis thaliana (Mouse-ear cress).